The following is a 66-amino-acid chain: Conotoxin Cal5.2 (66 aa).

An N-terminal signal peptide occupies residues 1-20; that stretch reads MMYCLPVVCILLLLIPSSAT. The propeptide occupies 21-51; sequence FVVESRLEKDQAQSFTGDAWKRVSPIHEMIQ. Valine 65 carries the post-translational modification Valine amide.

It belongs to the conotoxin T superfamily. In terms of processing, contains 2 disulfide bonds that can be either 'C1-C3, C2-C4' or 'C1-C4, C2-C3', since these disulfide connectivities have been observed for conotoxins with cysteine framework V (for examples, see AC P0DQQ7 and AC P81755). As to expression, expressed by the venom duct.

It is found in the secreted. Functionally, probable neurotoxin with unknown target. Possibly targets ion channels. The protein is Conotoxin Cal5.2 of Californiconus californicus (California cone).